Reading from the N-terminus, the 126-residue chain is Small ribosomal subunit protein uS13 (126 aa).

The disordered stretch occupies residues 92–126 (RMGLPVRGQRTRTNARTRRGGRRTVAGKKKAPAKK). The segment covering 100–126 (QRTRTNARTRRGGRRTVAGKKKAPAKK) has biased composition (basic residues).

The protein belongs to the universal ribosomal protein uS13 family. In terms of assembly, part of the 30S ribosomal subunit. Forms a loose heterodimer with protein S19. Forms two bridges to the 50S subunit in the 70S ribosome.

Functionally, located at the top of the head of the 30S subunit, it contacts several helices of the 16S rRNA. In the 70S ribosome it contacts the 23S rRNA (bridge B1a) and protein L5 of the 50S subunit (bridge B1b), connecting the 2 subunits; these bridges are implicated in subunit movement. Contacts the tRNAs in the A and P-sites. This is Small ribosomal subunit protein uS13 from Cyanothece sp. (strain PCC 7425 / ATCC 29141).